A 133-amino-acid polypeptide reads, in one-letter code: Magnetosome protein MamC (133 aa).

The Cytoplasmic portion of the chain corresponds to 1 to 5; it reads MAAFN. A helical transmembrane segment spans residues 6 to 26; the sequence is LALYLSKSIPGVGVLGGVIGG. Residues 27-67 lie on the Lumenal side of the membrane; the sequence is SAALAKNLKAKQRGEITTEEAVIDTGKEALGAGLATTVSAY. Positions 37-57 are magnetite interacting component (MIC) binds magnetite; the sequence is KQRGEITTEEAVIDTGKEALG. The chain crosses the membrane as a helical span at residues 68-88; it reads AAGVVGGGLVVSLGTAFAVAV. Over 89–133 the chain is Cytoplasmic; it reads AGKYAWDYGMEQMEAKLQEKKHQEQGGQTYGDNPDPFDPQELETP. Residues 105 to 133 are disordered; that stretch reads LQEKKHQEQGGQTYGDNPDPFDPQELETP.

The protein belongs to the magnetosome MamC family. As to quaternary structure, probably interacts with MamA.

The protein resides in the magnetosome membrane. In terms of biological role, probably helps control the size of magnetite crystals; in vitro synthesis of magnetite yields larger and more well-developed magnetite crystals in the presence of purified MamC. Binds Fe(3+). The lumenal domain probably binds magnetite crystals, affecting crystal size and shape. Purified MamC self-assembles into micelles in the presence of ferric chloride hexahydrate (FeCl(3).6H(2)O); both oxygen and iron are present in the proteinaceous micelles. Whether this is relevant in vivo is unknown. This is Magnetosome protein MamC from Magnetococcus marinus (strain ATCC BAA-1437 / JCM 17883 / MC-1).